A 454-amino-acid polypeptide reads, in one-letter code: Bifunctional protein GlmU (454 aa).

Residues 1 to 227 (MTQLSVVILA…FMEVEGANNR (227 aa)) are pyrophosphorylase. Residues 9 to 12 (LAAG), Lys23, Gln74, 79 to 80 (GT), 101 to 103 (YGD), Gly138, Glu152, Asn167, and Asn225 each bind UDP-N-acetyl-alpha-D-glucosamine. A Mg(2+)-binding site is contributed by Asp103. Asn225 contributes to the Mg(2+) binding site. The linker stretch occupies residues 228–248 (LQLAALERFYQKTQAEKLLLA). An N-acetyltransferase region spans residues 249–454 (GVRLIDQARF…QGWQRPTKKK (206 aa)). UDP-N-acetyl-alpha-D-glucosamine contacts are provided by Arg331 and Lys349. His361 acts as the Proton acceptor in catalysis. Positions 364 and 375 each coordinate UDP-N-acetyl-alpha-D-glucosamine. Acetyl-CoA-binding positions include Ala378, 384 to 385 (NY), Ser403, Ala421, and Arg438.

This sequence in the N-terminal section; belongs to the N-acetylglucosamine-1-phosphate uridyltransferase family. The protein in the C-terminal section; belongs to the transferase hexapeptide repeat family. Homotrimer. It depends on Mg(2+) as a cofactor.

It is found in the cytoplasm. It catalyses the reaction alpha-D-glucosamine 1-phosphate + acetyl-CoA = N-acetyl-alpha-D-glucosamine 1-phosphate + CoA + H(+). The catalysed reaction is N-acetyl-alpha-D-glucosamine 1-phosphate + UTP + H(+) = UDP-N-acetyl-alpha-D-glucosamine + diphosphate. It participates in nucleotide-sugar biosynthesis; UDP-N-acetyl-alpha-D-glucosamine biosynthesis; N-acetyl-alpha-D-glucosamine 1-phosphate from alpha-D-glucosamine 6-phosphate (route II): step 2/2. Its pathway is nucleotide-sugar biosynthesis; UDP-N-acetyl-alpha-D-glucosamine biosynthesis; UDP-N-acetyl-alpha-D-glucosamine from N-acetyl-alpha-D-glucosamine 1-phosphate: step 1/1. The protein operates within bacterial outer membrane biogenesis; LPS lipid A biosynthesis. In terms of biological role, catalyzes the last two sequential reactions in the de novo biosynthetic pathway for UDP-N-acetylglucosamine (UDP-GlcNAc). The C-terminal domain catalyzes the transfer of acetyl group from acetyl coenzyme A to glucosamine-1-phosphate (GlcN-1-P) to produce N-acetylglucosamine-1-phosphate (GlcNAc-1-P), which is converted into UDP-GlcNAc by the transfer of uridine 5-monophosphate (from uridine 5-triphosphate), a reaction catalyzed by the N-terminal domain. This is Bifunctional protein GlmU from Actinobacillus pleuropneumoniae serotype 7 (strain AP76).